Reading from the N-terminus, the 64-residue chain is Large ribosomal subunit protein bL32 (64 aa).

Residues 1–28 are disordered; it reads MAVQKSRVTPSRRGQRRSHDALTAKKLS.

This sequence belongs to the bacterial ribosomal protein bL32 family.

The chain is Large ribosomal subunit protein bL32 (rpmF) from Xylella fastidiosa (strain 9a5c).